A 390-amino-acid chain; its full sequence is UPF0229 protein ABC1477 (390 aa).

2 disordered regions span residues 1–31 (MEKD…RHQE) and 81–118 (VGQG…QAGE). Over residues 7–16 (RQFTISQENW) the composition is skewed to polar residues. 2 stretches are compositionally biased toward basic and acidic residues: residues 22–31 (GFQDQRRHQE) and 86–100 (GDSK…DPNG).

Belongs to the UPF0229 family.

This is UPF0229 protein ABC1477 from Shouchella clausii (strain KSM-K16) (Alkalihalobacillus clausii).